A 960-amino-acid chain; its full sequence is Putative helicase L207/L206 (960 aa).

A disordered region spans residues 1–32; sequence MTSKTENKKSVSSKTGRTTNNSTNKKTTEKSV. The span at 12 to 25 shows a compositional bias: low complexity; that stretch reads SSKTGRTTNNSTNK. The region spanning 646-807 is the SF3 helicase domain; the sequence is SMREYILTLL…FIKHSEATKK (162 aa).

In Acanthamoeba polyphaga mimivirus (APMV), this protein is Putative helicase L207/L206.